The chain runs to 235 residues: Claudin-15 (235 aa).

M1 is a topological domain (cytoplasmic). Residues 2–24 form a helical membrane-spanning segment; it reads LVAVEIFGFFLTAVGLLMLGVTL. Over 25–74 the chain is Extracellular; the sequence is AHSSWRVSTVHGNVITTNTIFENLWYSCATDSMGVHNCWEFPSMLALSGY. C52 and C62 are disulfide-bonded. Residues 75 to 99 traverse the membrane as a helical segment; the sequence is IQACRALMITAILLGFLGLFLGMVG. Topologically, residues 100-115 are cytoplasmic; the sequence is LRCTNIGGLELSRKTK. S111 is modified (phosphoserine). A helical membrane pass occupies residues 116–140; that stretch reads LAATAGALHILAGICGMVAVSWYAF. Residues 141–159 lie on the Extracellular side of the membrane; sequence NITRDFFNPLYAGTKYELG. Positions 146 to 147 are important for the formation of tight-junction strand-like structures; that stretch reads FF. Residues 160 to 182 form a helical membrane-spanning segment; that stretch reads PALYLGWSACLLAILGGICLFSN. Residues 183–235 lie on the Cytoplasmic side of the membrane; that stretch reads CCCSRDRDPATGVQLPYKAPVIPAASLAARLPAAASDEEGDSSFGKYGKNAYV. Phosphoserine occurs at positions 218 and 225.

This sequence belongs to the claudin family. In terms of assembly, can form homo- and heteropolymeric tight junction strands. Post-translationally, palmitoylated.

It localises to the cell junction. The protein resides in the tight junction. Its subcellular location is the cell membrane. It catalyses the reaction Na(+)(in) = Na(+)(out). The catalysed reaction is K(+)(in) = K(+)(out). It carries out the reaction Cs(+)(in) = Cs(+)(out). The enzyme catalyses Rb(+)(in) = Rb(+)(out). It catalyses the reaction Li(+)(in) = Li(+)(out). The catalysed reaction is NH4(+)(in) = NH4(+)(out). It carries out the reaction methylamine(out) = methylamine(in). The enzyme catalyses H2O(in) = H2O(out). In terms of biological role, forms paracellular channels: polymerizes in tight junction strands with cation- and water-selective channels through the strands, conveying epithelial permeability in a process known as paracellular tight junction permeability. In intestinal epithelium, allows for sodium and water fluxes from the peritoneal side to the lumen of the intestine to regulate nutrient absorption and intestinal morphogenesis. The protein is Claudin-15 (CLDN15) of Bos taurus (Bovine).